Reading from the N-terminus, the 220-residue chain is ATP phosphoribosyltransferase (220 aa).

This sequence belongs to the ATP phosphoribosyltransferase family. Short subfamily. Heteromultimer composed of HisG and HisZ subunits.

It localises to the cytoplasm. The enzyme catalyses 1-(5-phospho-beta-D-ribosyl)-ATP + diphosphate = 5-phospho-alpha-D-ribose 1-diphosphate + ATP. The protein operates within amino-acid biosynthesis; L-histidine biosynthesis; L-histidine from 5-phospho-alpha-D-ribose 1-diphosphate: step 1/9. In terms of biological role, catalyzes the condensation of ATP and 5-phosphoribose 1-diphosphate to form N'-(5'-phosphoribosyl)-ATP (PR-ATP). Has a crucial role in the pathway because the rate of histidine biosynthesis seems to be controlled primarily by regulation of HisG enzymatic activity. In Prochlorococcus marinus (strain NATL1A), this protein is ATP phosphoribosyltransferase.